The sequence spans 295 residues: Phosphatidylserine decarboxylase proenzyme (295 aa).

Active-site charge relay system; for autoendoproteolytic cleavage activity residues include aspartate 113, histidine 169, and serine 256. Serine 256 acts as the Schiff-base intermediate with substrate; via pyruvic acid; for decarboxylase activity in catalysis. Position 256 is a pyruvic acid (Ser); by autocatalysis (serine 256).

Belongs to the phosphatidylserine decarboxylase family. PSD-B subfamily. Prokaryotic type II sub-subfamily. As to quaternary structure, heterodimer of a large membrane-associated beta subunit and a small pyruvoyl-containing alpha subunit. Pyruvate is required as a cofactor. Post-translationally, is synthesized initially as an inactive proenzyme. Formation of the active enzyme involves a self-maturation process in which the active site pyruvoyl group is generated from an internal serine residue via an autocatalytic post-translational modification. Two non-identical subunits are generated from the proenzyme in this reaction, and the pyruvate is formed at the N-terminus of the alpha chain, which is derived from the carboxyl end of the proenzyme. The autoendoproteolytic cleavage occurs by a canonical serine protease mechanism, in which the side chain hydroxyl group of the serine supplies its oxygen atom to form the C-terminus of the beta chain, while the remainder of the serine residue undergoes an oxidative deamination to produce ammonia and the pyruvoyl prosthetic group on the alpha chain. During this reaction, the Ser that is part of the protease active site of the proenzyme becomes the pyruvoyl prosthetic group, which constitutes an essential element of the active site of the mature decarboxylase.

It localises to the cell membrane. The catalysed reaction is a 1,2-diacyl-sn-glycero-3-phospho-L-serine + H(+) = a 1,2-diacyl-sn-glycero-3-phosphoethanolamine + CO2. It participates in phospholipid metabolism; phosphatidylethanolamine biosynthesis; phosphatidylethanolamine from CDP-diacylglycerol: step 2/2. Its function is as follows. Catalyzes the formation of phosphatidylethanolamine (PtdEtn) from phosphatidylserine (PtdSer). The sequence is that of Phosphatidylserine decarboxylase proenzyme from Clostridium botulinum (strain Kyoto / Type A2).